The primary structure comprises 565 residues: NAD-dependent malic enzyme (565 aa).

Tyrosine 104 acts as the Proton donor in catalysis. Arginine 157 contributes to the NAD(+) binding site. Lysine 175 acts as the Proton acceptor in catalysis. 3 residues coordinate a divalent metal cation: glutamate 246, aspartate 247, and aspartate 270. Residues aspartate 270 and asparagine 418 each coordinate NAD(+).

It belongs to the malic enzymes family. In terms of assembly, homotetramer. Mg(2+) is required as a cofactor. Mn(2+) serves as cofactor.

The catalysed reaction is (S)-malate + NAD(+) = pyruvate + CO2 + NADH. It catalyses the reaction oxaloacetate + H(+) = pyruvate + CO2. This is NAD-dependent malic enzyme from Escherichia coli O157:H7.